A 237-amino-acid chain; its full sequence is Ribosomal RNA small subunit methyltransferase G (237 aa).

S-adenosyl-L-methionine is bound by residues Gly-78, Phe-83, 129-130 (AE), and Arg-148. Residues 216 to 237 (SKKKETPNKYPRKAGTPNKKPL) form a disordered region.

This sequence belongs to the methyltransferase superfamily. RNA methyltransferase RsmG family.

It is found in the cytoplasm. Specifically methylates the N7 position of a guanine in 16S rRNA. This chain is Ribosomal RNA small subunit methyltransferase G, found in Streptococcus agalactiae serotype III (strain NEM316).